A 433-amino-acid polypeptide reads, in one-letter code: 23S rRNA (uracil(1939)-C(5))-methyltransferase RlmD (433 aa).

The region spanning 10–68 is the TRAM domain; it reads RTTTRQIITVSVNDLDSFGQGVARHNGKTLFIPGLLPQENAEVTVTEDKKQYARAKVVR. Interaction with RNA regions lie at residues 23–40 and 58–63; these read DLDSFGQGVARHNGKTLF and KKQYAR. [4Fe-4S] cluster contacts are provided by C81, C87, C90, and C162. Residues Q265, F294, N299, E315, N342, and D363 each coordinate S-adenosyl-L-methionine. Catalysis depends on C389, which acts as the Nucleophile.

It belongs to the class I-like SAM-binding methyltransferase superfamily. RNA M5U methyltransferase family. RlmD subfamily.

The catalysed reaction is uridine(1939) in 23S rRNA + S-adenosyl-L-methionine = 5-methyluridine(1939) in 23S rRNA + S-adenosyl-L-homocysteine + H(+). In terms of biological role, catalyzes the formation of 5-methyl-uridine at position 1939 (m5U1939) in 23S rRNA. This Escherichia coli (strain K12) protein is 23S rRNA (uracil(1939)-C(5))-methyltransferase RlmD.